Here is a 656-residue protein sequence, read N- to C-terminus: L-type lectin-domain containing receptor kinase S.1 (656 aa).

The N-terminal stretch at 1–29 (MSWQWRRRQWPSPLLLILIVLHLVSSSSA) is a signal peptide. The interval 30 to 273 (IDFLYNSFSS…ARRILAWSLS (244 aa)) is legume-lectin like. Residues 30-304 (IDFLYNSFSS…SSSLSTGAIA (275 aa)) are Extracellular-facing. Residues N42, N63, N121, N139, N191, N219, N282, and N293 are each glycosylated (N-linked (GlcNAc...) asparagine). A helical membrane pass occupies residues 305–325 (GIVIGCVVFVALIGFGGYLIW). Over 326-656 (KKLMREEEEE…AAADSTAAHA (331 aa)) the chain is Cytoplasmic. The 279-residue stretch at 361–639 (FSNDRLLGSG…LLGSPQEDLL (279 aa)) folds into the Protein kinase domain. ATP is bound by residues 367–375 (LGSGGFGKV) and K389. The active-site Proton acceptor is D485.

It in the C-terminal section; belongs to the protein kinase superfamily. Ser/Thr protein kinase family. This sequence in the N-terminal section; belongs to the leguminous lectin family.

It is found in the cell membrane. It carries out the reaction L-seryl-[protein] + ATP = O-phospho-L-seryl-[protein] + ADP + H(+). The catalysed reaction is L-threonyl-[protein] + ATP = O-phospho-L-threonyl-[protein] + ADP + H(+). Functionally, involved in resistance response to the pathogenic oomycetes Phytophthora infestans and Phytophthora capsici and to the pathogenic bacteria Pseudomonas syringae. The polypeptide is L-type lectin-domain containing receptor kinase S.1 (Arabidopsis thaliana (Mouse-ear cress)).